A 456-amino-acid chain; its full sequence is Bifunctional protein GlmU (456 aa).

Residues 1–229 (MLNSAMSVVI…ISETDGVNNR (229 aa)) form a pyrophosphorylase region. UDP-N-acetyl-alpha-D-glucosamine-binding positions include 11 to 14 (LAAG), lysine 25, glutamine 76, 81 to 82 (GT), 103 to 105 (YGD), glycine 140, glutamate 154, asparagine 169, and asparagine 227. Aspartate 105 lines the Mg(2+) pocket. Asparagine 227 is a binding site for Mg(2+). A linker region spans residues 230 to 250 (LQLSRLERIYQAEQAEKLLLS). The segment at 251–456 (GVMLRDPARF…QGWQRPVKKK (206 aa)) is N-acetyltransferase. 2 residues coordinate UDP-N-acetyl-alpha-D-glucosamine: arginine 333 and lysine 351. Histidine 363 serves as the catalytic Proton acceptor. 2 residues coordinate UDP-N-acetyl-alpha-D-glucosamine: tyrosine 366 and asparagine 377. Residues alanine 380, 386–387 (NY), serine 405, alanine 423, and arginine 440 each bind acetyl-CoA.

This sequence in the N-terminal section; belongs to the N-acetylglucosamine-1-phosphate uridyltransferase family. In the C-terminal section; belongs to the transferase hexapeptide repeat family. In terms of assembly, homotrimer. Mg(2+) is required as a cofactor.

It is found in the cytoplasm. It carries out the reaction alpha-D-glucosamine 1-phosphate + acetyl-CoA = N-acetyl-alpha-D-glucosamine 1-phosphate + CoA + H(+). The enzyme catalyses N-acetyl-alpha-D-glucosamine 1-phosphate + UTP + H(+) = UDP-N-acetyl-alpha-D-glucosamine + diphosphate. The protein operates within nucleotide-sugar biosynthesis; UDP-N-acetyl-alpha-D-glucosamine biosynthesis; N-acetyl-alpha-D-glucosamine 1-phosphate from alpha-D-glucosamine 6-phosphate (route II): step 2/2. Its pathway is nucleotide-sugar biosynthesis; UDP-N-acetyl-alpha-D-glucosamine biosynthesis; UDP-N-acetyl-alpha-D-glucosamine from N-acetyl-alpha-D-glucosamine 1-phosphate: step 1/1. It functions in the pathway bacterial outer membrane biogenesis; LPS lipid A biosynthesis. Its function is as follows. Catalyzes the last two sequential reactions in the de novo biosynthetic pathway for UDP-N-acetylglucosamine (UDP-GlcNAc). The C-terminal domain catalyzes the transfer of acetyl group from acetyl coenzyme A to glucosamine-1-phosphate (GlcN-1-P) to produce N-acetylglucosamine-1-phosphate (GlcNAc-1-P), which is converted into UDP-GlcNAc by the transfer of uridine 5-monophosphate (from uridine 5-triphosphate), a reaction catalyzed by the N-terminal domain. The sequence is that of Bifunctional protein GlmU from Salmonella dublin (strain CT_02021853).